The primary structure comprises 222 residues: GTP cyclohydrolase 1 (222 aa).

Positions 111, 114, and 182 each coordinate Zn(2+).

The protein belongs to the GTP cyclohydrolase I family. In terms of assembly, toroid-shaped homodecamer, composed of two pentamers of five dimers.

It carries out the reaction GTP + H2O = 7,8-dihydroneopterin 3'-triphosphate + formate + H(+). Its pathway is cofactor biosynthesis; 7,8-dihydroneopterin triphosphate biosynthesis; 7,8-dihydroneopterin triphosphate from GTP: step 1/1. Its activity is regulated as follows. Allosteric enzyme. Activity is modulated by K(+), divalent cations, UTP, and tetrahydrobiopterin. Tetrahydrobiopterin is an inhibitor of this enzyme. The sequence is that of GTP cyclohydrolase 1 from Salmonella typhi.